The sequence spans 538 residues: Importin subunit alpha-6 (538 aa).

Positions 1–58 constitute an IBB domain; sequence MSYKPSAKTEVRRNRYKVSVDADEGRRRREDNMVEIRKNKREENLQKKRREGFNPSMA. Residues 1 to 69 are disordered; it reads MSYKPSAKTE…QPGQDFSSSL (69 aa). The segment covering 7-46 has biased composition (basic and acidic residues); that stretch reads AKTEVRRNRYKVSVDADEGRRRREDNMVEIRKNKREENLQ. Positions 56–69 are enriched in polar residues; sequence SMASQPGQDFSSSL. ARM repeat units lie at residues 109 to 149, 152 to 191, 194 to 234, 236 to 275, 278 to 317, 320 to 360, 363 to 402, and 406 to 445; these read NPPI…NIAS, SENT…NVAG, PKCR…NFCR, KPQP…YLSD, NEKI…NIVT, DIQT…NITA, TSQI…NATS, and HDQI…NILK.

This sequence belongs to the importin alpha family. In terms of assembly, forms a complex with importin subunit beta-1.

Its subcellular location is the nucleus envelope. In terms of biological role, binds to conventional NLS motifs and mediates nuclear protein import across the nuclear envelope. Acts as a cellular receptor for the nuclear import of the virD2 protein of Agrobacterium, but is not essential for Agrobacterium-mediated root transformation. This chain is Importin subunit alpha-6, found in Arabidopsis thaliana (Mouse-ear cress).